Reading from the N-terminus, the 191-residue chain is Crossover junction endodeoxyribonuclease RuvC (191 aa).

Active-site residues include aspartate 7, glutamate 67, and aspartate 141. Positions 7, 67, and 141 each coordinate Mg(2+).

The protein belongs to the RuvC family. Homodimer which binds Holliday junction (HJ) DNA. The HJ becomes 2-fold symmetrical on binding to RuvC with unstacked arms; it has a different conformation from HJ DNA in complex with RuvA. In the full resolvosome a probable DNA-RuvA(4)-RuvB(12)-RuvC(2) complex forms which resolves the HJ. Requires Mg(2+) as cofactor.

It is found in the cytoplasm. It carries out the reaction Endonucleolytic cleavage at a junction such as a reciprocal single-stranded crossover between two homologous DNA duplexes (Holliday junction).. Its function is as follows. The RuvA-RuvB-RuvC complex processes Holliday junction (HJ) DNA during genetic recombination and DNA repair. Endonuclease that resolves HJ intermediates. Cleaves cruciform DNA by making single-stranded nicks across the HJ at symmetrical positions within the homologous arms, yielding a 5'-phosphate and a 3'-hydroxyl group; requires a central core of homology in the junction. The consensus cleavage sequence is 5'-(A/T)TT(C/G)-3'. Cleavage occurs on the 3'-side of the TT dinucleotide at the point of strand exchange. HJ branch migration catalyzed by RuvA-RuvB allows RuvC to scan DNA until it finds its consensus sequence, where it cleaves and resolves the cruciform DNA. This chain is Crossover junction endodeoxyribonuclease RuvC, found in Myxococcus xanthus (strain DK1622).